The primary structure comprises 212 residues: Proteasome subunit beta 2 (212 aa).

Residues Met1–Gly13 constitute a propeptide, removed in mature form; by autocatalysis. Residue Thr14 is the Nucleophile of the active site.

It belongs to the peptidase T1B family. The 20S proteasome core is composed of 14 alpha and 14 beta subunits that assemble into four stacked heptameric rings, resulting in a barrel-shaped structure. The two inner rings, each composed of seven catalytic beta subunits, are sandwiched by two outer rings, each composed of seven alpha subunits. The catalytic chamber with the active sites is on the inside of the barrel. Has a gated structure, the ends of the cylinder being occluded by the N-termini of the alpha-subunits. Is capped at one or both ends by the proteasome regulatory ATPase, PAN.

The protein localises to the cytoplasm. The enzyme catalyses Cleavage of peptide bonds with very broad specificity.. The formation of the proteasomal ATPase PAN-20S proteasome complex, via the docking of the C-termini of PAN into the intersubunit pockets in the alpha-rings, triggers opening of the gate for substrate entry. Interconversion between the open-gate and close-gate conformations leads to a dynamic regulation of the 20S proteasome proteolysis activity. Functionally, component of the proteasome core, a large protease complex with broad specificity involved in protein degradation. The chain is Proteasome subunit beta 2 from Ignicoccus hospitalis (strain KIN4/I / DSM 18386 / JCM 14125).